The following is a 241-amino-acid chain: 1-(5-phosphoribosyl)-5-[(5-phosphoribosylamino)methylideneamino] imidazole-4-carboxamide isomerase (241 aa).

Asp-8 (proton acceptor) is an active-site residue. Asp-129 functions as the Proton donor in the catalytic mechanism.

This sequence belongs to the HisA/HisF family.

Its subcellular location is the cytoplasm. The enzyme catalyses 1-(5-phospho-beta-D-ribosyl)-5-[(5-phospho-beta-D-ribosylamino)methylideneamino]imidazole-4-carboxamide = 5-[(5-phospho-1-deoxy-D-ribulos-1-ylimino)methylamino]-1-(5-phospho-beta-D-ribosyl)imidazole-4-carboxamide. The protein operates within amino-acid biosynthesis; L-histidine biosynthesis; L-histidine from 5-phospho-alpha-D-ribose 1-diphosphate: step 4/9. This is 1-(5-phosphoribosyl)-5-[(5-phosphoribosylamino)methylideneamino] imidazole-4-carboxamide isomerase from Chloroflexus aurantiacus (strain ATCC 29364 / DSM 637 / Y-400-fl).